Here is a 326-residue protein sequence, read N- to C-terminus: 3-oxopimeloyl-[acyl-carrier-protein] synthase (326 aa).

Catalysis depends on residues C115 and H253. Positions Q254–R258 are ACP-binding. The active site involves N283.

Belongs to the thiolase-like superfamily. BioZ family.

The enzyme catalyses malonyl-[ACP] + an acyl-CoA + H(+) = a 3-oxoacyl-[ACP] + CO2 + CoA. The catalysed reaction is glutaryl-CoA + malonyl-[ACP] + H(+) = 3-oxo-6-carboxyhexanoyl-[ACP] + CO2 + CoA. The protein operates within cofactor biosynthesis; biotin biosynthesis. Functionally, involved in the formation of the biotin precursor pimeloyl-ACP. Catalyzes the condensation of glutaryl-CoA, an intermediate in lysine degradation, with malonyl-ACP to produce 3-oxopimeloyl-ACP. The chain is 3-oxopimeloyl-[acyl-carrier-protein] synthase from Brucella abortus (strain 2308).